A 165-amino-acid polypeptide reads, in one-letter code: Endoribonuclease YbeY (165 aa).

H131, H135, and H141 together coordinate Zn(2+).

The protein belongs to the endoribonuclease YbeY family. It depends on Zn(2+) as a cofactor.

It is found in the cytoplasm. Functionally, single strand-specific metallo-endoribonuclease involved in late-stage 70S ribosome quality control and in maturation of the 3' terminus of the 16S rRNA. This Lachnoclostridium phytofermentans (strain ATCC 700394 / DSM 18823 / ISDg) (Clostridium phytofermentans) protein is Endoribonuclease YbeY.